A 317-amino-acid polypeptide reads, in one-letter code: Melanocyte-stimulating hormone receptor (317 aa).

At 1 to 37 (MPMQGAQRRLLGSLNSTPTATPNLGLAANHTGAPCLE) the chain is on the extracellular side. Residue Asn29 is glycosylated (N-linked (GlcNAc...) asparagine). A helical membrane pass occupies residues 38 to 63 (VSIPDGLFLSLGLVSLVENVLVVAAI). Residues 64 to 72 (AKNRNLHSP) are Cytoplasmic-facing. The helical transmembrane segment at 73–93 (MYCFICCLALSDLLVSGSNML) threads the bilayer. The Extracellular segment spans residues 94–118 (EMAVILLLEAGALATRASVVQQLQN). A helical membrane pass occupies residues 119–140 (TIDVLTCSSMLCSLCFLGAIAV). At 141–163 (DRYVSIFYALRYHSIVTLPRARR) the chain is on the cytoplasmic side. A helical membrane pass occupies residues 164–183 (AIAAIWVASVLSSTLFIAYC). Topologically, residues 184–191 (DHAAVLLC) are extracellular. Residues 192–211 (LVVFFLAMLVLMAVLYVHML) form a helical membrane-spanning segment. Residues 212-240 (ARACQHAQGITRLHKRQLPAHQGFGLRGA) are Cytoplasmic-facing. A helical membrane pass occupies residues 241-266 (ATLTILLGIFFVCWGPFFLHLMLVVL). Topologically, residues 267–279 (CPQHLTCSCIFKN) are extracellular. A helical membrane pass occupies residues 280 to 300 (FKVFLTLIICNTIIDPLIYAF). Residues 301–317 (RSQELCRTLKEVLLCSW) lie on the Cytoplasmic side of the membrane. Cys315 carries S-palmitoyl cysteine lipidation.

The protein belongs to the G-protein coupled receptor 1 family. Interacts with MGRN1, but does not undergo MGRN1-mediated ubiquitination; this interaction competes with GNAS-binding and thus inhibits agonist-induced cAMP production. Interacts with OPN3; the interaction results in a decrease in MC1R-mediated cAMP signaling and ultimately a decrease in melanin production in melanocytes.

It localises to the cell membrane. In terms of biological role, receptor for MSH (alpha, beta and gamma) and ACTH. The activity of this receptor is mediated by G proteins which activate adenylate cyclase. Mediates melanogenesis, the production of eumelanin (black/brown) and phaeomelanin (red/yellow), via regulation of cAMP signaling in melanocytes. The protein is Melanocyte-stimulating hormone receptor (MC1R) of Alouatta sara (Bolivian red howler monkey).